Here is a 574-residue protein sequence, read N- to C-terminus: Arginine--tRNA ligase (574 aa).

A 'HIGH' region motif is present at residues 121-131 (PNIAKEMHIGH).

It belongs to the class-I aminoacyl-tRNA synthetase family. Monomer.

The protein resides in the cytoplasm. It carries out the reaction tRNA(Arg) + L-arginine + ATP = L-arginyl-tRNA(Arg) + AMP + diphosphate. In Buchnera aphidicola subsp. Acyrthosiphon pisum (strain Tuc7), this protein is Arginine--tRNA ligase.